We begin with the raw amino-acid sequence, 213 residues long: ATP phosphoribosyltransferase (213 aa).

It belongs to the ATP phosphoribosyltransferase family. Short subfamily. In terms of assembly, heteromultimer composed of HisG and HisZ subunits.

The protein localises to the cytoplasm. It carries out the reaction 1-(5-phospho-beta-D-ribosyl)-ATP + diphosphate = 5-phospho-alpha-D-ribose 1-diphosphate + ATP. It participates in amino-acid biosynthesis; L-histidine biosynthesis; L-histidine from 5-phospho-alpha-D-ribose 1-diphosphate: step 1/9. In terms of biological role, catalyzes the condensation of ATP and 5-phosphoribose 1-diphosphate to form N'-(5'-phosphoribosyl)-ATP (PR-ATP). Has a crucial role in the pathway because the rate of histidine biosynthesis seems to be controlled primarily by regulation of HisG enzymatic activity. This chain is ATP phosphoribosyltransferase, found in Synechococcus sp. (strain RCC307).